We begin with the raw amino-acid sequence, 427 residues long: UDP-N-acetylglucosamine 1-carboxyvinyltransferase 2 (427 aa).

19-20 (KN) is a phosphoenolpyruvate binding site. Arg-91 contributes to the UDP-N-acetyl-alpha-D-glucosamine binding site. Cys-115 (proton donor) is an active-site residue. Cys-115 carries the post-translational modification 2-(S-cysteinyl)pyruvic acid O-phosphothioketal. Positions 307 and 329 each coordinate UDP-N-acetyl-alpha-D-glucosamine.

The protein belongs to the EPSP synthase family. MurA subfamily.

It localises to the cytoplasm. It catalyses the reaction phosphoenolpyruvate + UDP-N-acetyl-alpha-D-glucosamine = UDP-N-acetyl-3-O-(1-carboxyvinyl)-alpha-D-glucosamine + phosphate. Its pathway is cell wall biogenesis; peptidoglycan biosynthesis. In terms of biological role, cell wall formation. Adds enolpyruvyl to UDP-N-acetylglucosamine. The chain is UDP-N-acetylglucosamine 1-carboxyvinyltransferase 2 from Prochlorococcus marinus (strain SARG / CCMP1375 / SS120).